The following is a 370-amino-acid chain: Putative glutamate--cysteine ligase 2 (370 aa).

This sequence belongs to the glutamate--cysteine ligase type 2 family. YbdK subfamily.

The enzyme catalyses L-cysteine + L-glutamate + ATP = gamma-L-glutamyl-L-cysteine + ADP + phosphate + H(+). Functionally, ATP-dependent carboxylate-amine ligase which exhibits weak glutamate--cysteine ligase activity. The polypeptide is Putative glutamate--cysteine ligase 2 (Herminiimonas arsenicoxydans).